A 302-amino-acid chain; its full sequence is Sulfate adenylyltransferase subunit 2 (302 aa).

The disordered stretch occupies residues 280–302; it reads RQGRLIDSDQSASMEQKKRQGYF.

This sequence belongs to the PAPS reductase family. CysD subfamily. In terms of assembly, heterodimer composed of CysD, the smaller subunit, and CysN.

It carries out the reaction sulfate + ATP + H(+) = adenosine 5'-phosphosulfate + diphosphate. The protein operates within sulfur metabolism; hydrogen sulfide biosynthesis; sulfite from sulfate: step 1/3. Its function is as follows. With CysN forms the ATP sulfurylase (ATPS) that catalyzes the adenylation of sulfate producing adenosine 5'-phosphosulfate (APS) and diphosphate, the first enzymatic step in sulfur assimilation pathway. APS synthesis involves the formation of a high-energy phosphoric-sulfuric acid anhydride bond driven by GTP hydrolysis by CysN coupled to ATP hydrolysis by CysD. The polypeptide is Sulfate adenylyltransferase subunit 2 (Shewanella baltica (strain OS223)).